Reading from the N-terminus, the 141-residue chain is Pyrophosphate-energized proton pump (141 aa).

Transmembrane regions (helical) follow at residues 11–31, 46–66, and 121–141; these read GLIATGLLSIVGLGVANTLTV, GTNLFVCGLIGLIVTGLIVVI, and LAGLFGTAIAVTAMLGIAGMI.

Belongs to the H(+)-translocating pyrophosphatase (TC 3.A.10) family. In terms of assembly, homodimer. The cofactor is Mg(2+).

It is found in the cell inner membrane. The enzyme catalyses diphosphate + H2O + H(+)(in) = 2 phosphate + 2 H(+)(out). Its function is as follows. Proton pump that utilizes the energy of pyrophosphate hydrolysis as the driving force for proton movement across the membrane. Generates a proton motive force. This Anaplasma marginale protein is Pyrophosphate-energized proton pump (hppA).